The chain runs to 504 residues: L-carnitine/gamma-butyrobetaine antiporter (504 aa).

Helical transmembrane passes span 10–30 (MEPKVFFPPLIIVGILCWLTV), 51–71 (WGWAFEWYMVVMLFGWFWLVF), 92–112 (IFMMFASCTSAAVLFWGSIEI), 143–163 (GPLPWATYSFLSVAFAYFFFV), 195–215 (FYLVALIFAMGTSLGLATPLV), 231–251 (LDAIIITCWIILNAICVACGL), 263–283 (SYLSFLMLGWVFIVSGASFIM), 316–336 (WSVFYWAWWVIYAIQMSIFLA), 347–367 (LCFGMVLGLTASTWILWTVLG), 398–418 (WAALPLSTATMWGFFILCFIA), 446–466 (LLVRIGWSILVGIIGIVLLAL), and 475–495 (AIIAGGCPLFFVNIMVTLSFI).

It belongs to the BCCT transporter (TC 2.A.15) family. CaiT subfamily. Homotrimer.

It is found in the cell inner membrane. The enzyme catalyses 4-(trimethylamino)butanoate(in) + (R)-carnitine(out) = 4-(trimethylamino)butanoate(out) + (R)-carnitine(in). Its pathway is amine and polyamine metabolism; carnitine metabolism. In terms of biological role, catalyzes the exchange of L-carnitine for gamma-butyrobetaine. The protein is L-carnitine/gamma-butyrobetaine antiporter of Shigella dysenteriae serotype 1 (strain Sd197).